We begin with the raw amino-acid sequence, 140 residues long: Small ribosomal subunit protein bS6 (140 aa).

The interval 96 to 140 (VTGQSEMLKAEENRSERRERRERPENAESNDGDDSDSNDSDNADE) is disordered. Residues 103 to 121 (LKAEENRSERRERRERPEN) show a composition bias toward basic and acidic residues. Residues 123-140 (ESNDGDDSDSNDSDNADE) are compositionally biased toward acidic residues.

This sequence belongs to the bacterial ribosomal protein bS6 family.

Its function is as follows. Binds together with bS18 to 16S ribosomal RNA. In Ectopseudomonas mendocina (strain ymp) (Pseudomonas mendocina), this protein is Small ribosomal subunit protein bS6.